Consider the following 491-residue polypeptide: 2,3-bisphosphoglycerate-independent phosphoglycerate mutase (491 aa).

Aspartate 11 and serine 61 together coordinate Mn(2+). The active-site Phosphoserine intermediate is the serine 61. Residues histidine 118, 147–148 (RD), arginine 177, arginine 183, 247–250 (RNDR), and lysine 320 contribute to the substrate site. Positions 386, 390, 427, 428, and 445 each coordinate Mn(2+).

It belongs to the BPG-independent phosphoglycerate mutase family. Monomer. Mn(2+) is required as a cofactor.

The enzyme catalyses (2R)-2-phosphoglycerate = (2R)-3-phosphoglycerate. The protein operates within carbohydrate degradation; glycolysis; pyruvate from D-glyceraldehyde 3-phosphate: step 3/5. Catalyzes the interconversion of 2-phosphoglycerate and 3-phosphoglycerate. This chain is 2,3-bisphosphoglycerate-independent phosphoglycerate mutase, found in Helicobacter pylori (strain ATCC 700392 / 26695) (Campylobacter pylori).